The chain runs to 217 residues: Probable glutathione S-transferase (217 aa).

The GST N-terminal domain occupies 2–81; the sequence is AEVKLLGLRY…YIDEAFEGPS (80 aa). Residues Ser-12, Lys-39, Ile-53, and 65 to 66 each bind glutathione; that span reads ES. The GST C-terminal domain maps to 86–210; sequence DPYDRALARF…ELLIRYRAYI (125 aa).

The protein belongs to the GST superfamily. HSP26 family.

It carries out the reaction RX + glutathione = an S-substituted glutathione + a halide anion + H(+). The protein is Probable glutathione S-transferase (PRP1) of Solanum tuberosum (Potato).